The primary structure comprises 194 residues: Peptidyl-tRNA hydrolase (194 aa).

Tyr-17 contributes to the tRNA binding site. The active-site Proton acceptor is the His-22. Positions 68, 70, and 116 each coordinate tRNA.

Belongs to the PTH family. Monomer.

The protein localises to the cytoplasm. The catalysed reaction is an N-acyl-L-alpha-aminoacyl-tRNA + H2O = an N-acyl-L-amino acid + a tRNA + H(+). Its function is as follows. Hydrolyzes ribosome-free peptidyl-tRNAs (with 1 or more amino acids incorporated), which drop off the ribosome during protein synthesis, or as a result of ribosome stalling. Functionally, catalyzes the release of premature peptidyl moieties from peptidyl-tRNA molecules trapped in stalled 50S ribosomal subunits, and thus maintains levels of free tRNAs and 50S ribosomes. The chain is Peptidyl-tRNA hydrolase from Mannheimia succiniciproducens (strain KCTC 0769BP / MBEL55E).